The primary structure comprises 202 residues: GTP cyclohydrolase 1 (202 aa).

Zn(2+)-binding residues include C90, H93, and C163.

It belongs to the GTP cyclohydrolase I family. As to quaternary structure, homomer.

It carries out the reaction GTP + H2O = 7,8-dihydroneopterin 3'-triphosphate + formate + H(+). It functions in the pathway cofactor biosynthesis; 7,8-dihydroneopterin triphosphate biosynthesis; 7,8-dihydroneopterin triphosphate from GTP: step 1/1. This Mycolicibacterium gilvum (strain PYR-GCK) (Mycobacterium gilvum (strain PYR-GCK)) protein is GTP cyclohydrolase 1.